The primary structure comprises 277 residues: ATP synthase subunit delta (277 aa).

Belongs to the ATPase delta chain family. As to quaternary structure, F-type ATPases have 2 components, F(1) - the catalytic core - and F(0) - the membrane proton channel. F(1) has five subunits: alpha(3), beta(3), gamma(1), delta(1), epsilon(1). F(0) has three main subunits: a(1), b(2) and c(10-14). The alpha and beta chains form an alternating ring which encloses part of the gamma chain. F(1) is attached to F(0) by a central stalk formed by the gamma and epsilon chains, while a peripheral stalk is formed by the delta and b chains.

The protein resides in the cell membrane. In terms of biological role, f(1)F(0) ATP synthase produces ATP from ADP in the presence of a proton or sodium gradient. F-type ATPases consist of two structural domains, F(1) containing the extramembraneous catalytic core and F(0) containing the membrane proton channel, linked together by a central stalk and a peripheral stalk. During catalysis, ATP synthesis in the catalytic domain of F(1) is coupled via a rotary mechanism of the central stalk subunits to proton translocation. Its function is as follows. This protein is part of the stalk that links CF(0) to CF(1). It either transmits conformational changes from CF(0) to CF(1) or is implicated in proton conduction. The protein is ATP synthase subunit delta of Frankia alni (strain DSM 45986 / CECT 9034 / ACN14a).